The following is a 772-amino-acid chain: Probable serine/threonine-protein kinase HAL5-like (772 aa).

Disordered stretches follow at residues 1-102 (MASS…TRHV), 115-165 (RAGT…EPNN), 185-241 (IDTQ…RSNT), and 344-396 (NADE…SANV). Residues 9-19 (SEPRISRESSL) show a composition bias toward basic and acidic residues. Composition is skewed to low complexity over residues 20–33 (KRSL…KGLF) and 41–59 (NTGP…ISTP). Over residues 66–86 (TKDKQDRLKNLAANKEKELQT) the composition is skewed to basic and acidic residues. The span at 146–158 (RQSSSNRSSSFSN) shows a compositional bias: low complexity. The span at 202–212 (RRSRSTQRKRL) shows a compositional bias: basic residues. The region spanning 454 to 758 (GKSIGIIGQG…VDSLLKSSWM (305 aa)) is the Protein kinase domain. ATP-binding positions include 460-468 (IGQGAYGVV) and Lys498. Asp609 acts as the Proton acceptor in catalysis.

The protein belongs to the protein kinase superfamily. CAMK Ser/Thr protein kinase family. NPR/HAL subfamily. HAL5 sub-subfamily.

The catalysed reaction is L-seryl-[protein] + ATP = O-phospho-L-seryl-[protein] + ADP + H(+). It catalyses the reaction L-threonyl-[protein] + ATP = O-phospho-L-threonyl-[protein] + ADP + H(+). The protein is Probable serine/threonine-protein kinase HAL5-like of Kluyveromyces lactis (strain ATCC 8585 / CBS 2359 / DSM 70799 / NBRC 1267 / NRRL Y-1140 / WM37) (Yeast).